The sequence spans 351 residues: D-alanine--D-alanine ligase (351 aa).

The region spanning 135 to 344 (KMAFAQAGLP…FAELVDQLIQ (210 aa)) is the ATP-grasp domain. 171 to 226 (EQRLGYPCFVKPANLGSSVGIAKVRSRSELEKALDSAASYDRRIVIETGVKAREVE) contributes to the ATP binding site. Aspartate 297, glutamate 311, and asparagine 313 together coordinate Mg(2+).

Belongs to the D-alanine--D-alanine ligase family. The cofactor is Mg(2+). Mn(2+) serves as cofactor.

The protein resides in the cytoplasm. It catalyses the reaction 2 D-alanine + ATP = D-alanyl-D-alanine + ADP + phosphate + H(+). Its pathway is cell wall biogenesis; peptidoglycan biosynthesis. Functionally, cell wall formation. This chain is D-alanine--D-alanine ligase, found in Rippkaea orientalis (strain PCC 8801 / RF-1) (Cyanothece sp. (strain PCC 8801)).